A 217-amino-acid polypeptide reads, in one-letter code: Large ribosomal subunit protein uL1 (217 aa).

This sequence belongs to the universal ribosomal protein uL1 family. As to quaternary structure, part of the 50S ribosomal subunit.

Its function is as follows. Binds directly to 23S rRNA. Probably involved in E site tRNA release. Protein L1 is also a translational repressor protein, it controls the translation of its operon by binding to its mRNA. The chain is Large ribosomal subunit protein uL1 from Hyperthermus butylicus (strain DSM 5456 / JCM 9403 / PLM1-5).